We begin with the raw amino-acid sequence, 496 residues long: Neuronal acetylcholine receptor subunit beta-4 (496 aa).

Residues M1 to G19 form the signal peptide. The Extracellular portion of the chain corresponds to D20–T236. N36, N93, N138, and N166 each carry an N-linked (GlcNAc...) asparagine glycan. A disulfide bridge links C153 with C167. The helical transmembrane segment at I237–P257 threads the bilayer. Residues S258–T265 are Cytoplasmic-facing. E262 provides a ligand contact to Na(+). Residues L266–P286 form a helical membrane-spanning segment. The Extracellular portion of the chain corresponds to P287–Y298. A helical transmembrane segment spans residues L299–V319. The Cytoplasmic segment spans residues H320–R464. The helical transmembrane segment at L465–P485 threads the bilayer. Topologically, residues L486 to P496 are extracellular.

Belongs to the ligand-gated ion channel (TC 1.A.9) family. Acetylcholine receptor (TC 1.A.9.1) subfamily. Beta-4/CHRNB4 sub-subfamily. In terms of assembly, neuronal AChR is composed of two different types of subunits: alpha and beta. CHRNB4/Beta-4 subunit can be combined to CHRNA2/alpha-2, CHRNA3/alpha-3 or CHRNA4/alpha-4, CHRNA5/alpha-5 and CHRNB3/beta-3 to give rise to functional receptors. Forms stoichiometries such as (CHRNA3)2:(CHRNB4)3 or (CHRNA3:CHRNB4)2:CHRNB3. Interacts with RIC3; which is required for proper folding and assembly. Interacts with LYPD6.

It is found in the synaptic cell membrane. It localises to the cell membrane. The enzyme catalyses Ca(2+)(in) = Ca(2+)(out). It carries out the reaction K(+)(in) = K(+)(out). It catalyses the reaction Na(+)(in) = Na(+)(out). In terms of biological role, component of neuronal acetylcholine receptors (nAChRs) that function as pentameric, ligand-gated cation channels with high calcium permeability among other activities. nAChRs are excitatory neurotrasnmitter receptors formed by a collection of nAChR subunits known to mediate synaptic transmission in the nervous system and the neuromuscular junction. Each nAchR subunit confers differential attributes to channel properties, including activation, deactivation and desensitization kinetics, pH sensitivity, cation permeability, and binding to allosteric modulators. CHRNB4 forms heteropentameric neuronal acetylcholine receptors with CHRNA2, CHRNA3 and CHRNA4, as well as CHRNA5 and CHRNB3 as accesory subunits. CHRNA3:CHRNB4 being predominant in neurons of the autonomic ganglia, it is known as ganglionic nicotinic receptor. CHRNA3:CHRNB4 or CHRNA3:CHRNA5:CHRNB4 play also an important role in the habenulo-interpeduncular tract, modulating the mesolimbic dopamine system and affecting reward circuits and addiction. Hypothalamic CHRNA3:CHRNB4 nAChR activation by nicotine leads to activation of POMC neurons and a decrease in food intake. This Bos taurus (Bovine) protein is Neuronal acetylcholine receptor subunit beta-4 (CHRNB4).